Consider the following 201-residue polypeptide: Recombination protein RecR (201 aa).

The segment at 57-74 (CRICGFITSKDDDPCVIC) adopts a C4-type zinc-finger fold. Residues 82-178 (SKIFVVENSQ…KVTRLARGLS (97 aa)) form the Toprim domain.

It belongs to the RecR family.

Functionally, may play a role in DNA repair. It seems to be involved in an RecBC-independent recombinational process of DNA repair. It may act with RecF and RecO. The protein is Recombination protein RecR of Oenococcus oeni (strain ATCC BAA-331 / PSU-1).